Here is a 28-residue protein sequence, read N- to C-terminus: Ranatuerin-2LT (28 aa).

C23 and C28 are joined by a disulfide.

Expressed by the skin glands.

Its subcellular location is the secreted. In terms of biological role, has antibacterial activity. The polypeptide is Ranatuerin-2LT (Rana latastei (Italian agile frog)).